A 450-amino-acid polypeptide reads, in one-letter code: tRNA modification GTPase MnmE (450 aa).

Residues R23, E79, and K118 each coordinate (6S)-5-formyl-5,6,7,8-tetrahydrofolate. A TrmE-type G domain is found at 214-374 (GITLILVGKP…LKEHILNKVG (161 aa)). N224 lines the K(+) pocket. GTP is bound by residues 224–229 (NAGKSS), 243–249 (TSIAGTT), and 268–271 (DTAG). S228 contributes to the Mg(2+) binding site. K(+) contacts are provided by T243, I245, and T248. Position 249 (T249) interacts with Mg(2+). K450 contacts (6S)-5-formyl-5,6,7,8-tetrahydrofolate.

This sequence belongs to the TRAFAC class TrmE-Era-EngA-EngB-Septin-like GTPase superfamily. TrmE GTPase family. Homodimer. Heterotetramer of two MnmE and two MnmG subunits. K(+) is required as a cofactor.

The protein localises to the cytoplasm. Functionally, exhibits a very high intrinsic GTPase hydrolysis rate. Involved in the addition of a carboxymethylaminomethyl (cmnm) group at the wobble position (U34) of certain tRNAs, forming tRNA-cmnm(5)s(2)U34. The sequence is that of tRNA modification GTPase MnmE from Francisella tularensis subsp. holarctica (strain OSU18).